The primary structure comprises 844 residues: MDDPAAPGPAGSPANDNGNGNGNGNGNGNGGKGKPAVPKGRETFRNQRRESEGSVDCPTLEFEYGDSDGHAAELSELYSYTENLEFTTNRKCFEEDFRTQVQDTKEWLELEEDAQKTYVMGLLDRLEVVSREKRLKVARAVLYLAQGTFGECDSEVDVLHWSRYNCFLLYQMGTFSAFLELLHMEIDNSQASSSALRKPAVSIADSTELRVLLSVMYLMVENIRLEREIDPCGWRTARETFRTELSFSTHNEEPFALLLFSMVTKFCSGLAPHFPIKKVLLLLWKVVMFTLGGFEHLQALKIQKRAELGLPPLAEDSIQVVKSMRAASPPSYTLDLGESQLAPPPSKLRGRRGSRRQLLTKQDSLDIYNERDLFKTEEPATEEEEESAADGERTLDGELDLLEQDPLVPPPPSQTPLSTDRVAFPKGLPWAPKVRQKDIEHFLEMSRNKFIGFTLGQDTDTLVGLPRPIHESVKTLKQHKYISIADIQIKNEEELEKCPLSLGEEVVPETPSEILYQGMLYSLPQYMIALLKILLAAAPTSKAKTDSINILADVLPEEMPVTVLQSMKLGIDVNRHKEIIVKSISALLLLLLKHFKLNHIYQFEYVSQHLVFANCIPLILKFFNQNILSYITAKNSISVLDYPCCTIQDLPELTTESLEAGDNSQFCWRNLFSCINLLRLLNKLTKWKHSRTMMLVVFKSAPILKRALKVKQAMLQLYVLKLLKIQTKYLGRQWRKSNMKTMSAIYQKVRHRMNDDWAYGNDIDARPWDFQAEECTLRANIEAFNSRRYDKPQDSEFSPVDNCLQSVLGQRLDLPEDFHYSYELWLEREVFSQPICWEELLQNH.

Low complexity predominate over residues 1–18 (MDDPAAPGPAGSPANDNG). The disordered stretch occupies residues 1–58 (MDDPAAPGPAGSPANDNGNGNGNGNGNGNGGKGKPAVPKGRETFRNQRRESEGSVDCP). A compositionally biased stretch (gly residues) spans 19–33 (NGNGNGNGNGNGGKG). Over residues 39-52 (KGRETFRNQRRESE) the composition is skewed to basic and acidic residues. Phosphoserine occurs at positions 328, 339, and 364. The tract at residues 331 to 355 (SYTLDLGESQLAPPPSKLRGRRGSR) is disordered. The interval 370–422 (ERDLFKTEEPATEEEEESAADGERTLDGELDLLEQDPLVPPPPSQTPLSTDRV) is disordered. Acidic residues predominate over residues 379–389 (PATEEEEESAA).

The protein belongs to the STRIP family. Part of the core of STRIPAK complexes composed of PP2A catalytic and scaffolding subunits, the striatins (PP2A regulatory subunits), the striatin-associated proteins MOB4, STRIP1 and STRIP2, PDCD10 and members of the STE20 kinases, such as STK24 and STK26. Interacts with CTTNBP2NL.

Its subcellular location is the cytoplasm. Functionally, plays a role in the regulation of cell morphology and cytoskeletal organization. Required in the control of cell shape. Calmodulin-binding scaffolding protein which is the center of the striatin-interacting phosphatase and kinase (STRIPAK) complexes. STRIPAK complexes have critical roles in protein (de)phosphorylation and are regulators of multiple signaling pathways including Hippo, MAPK, nuclear receptor and cytoskeleton remodeling. Different types of STRIPAK complexes are involved in a variety of biological processes such as cell growth, differentiation, apoptosis, metabolism and immune regulation. The chain is Striatin-interacting proteins 2 (Strip2) from Mus musculus (Mouse).